We begin with the raw amino-acid sequence, 345 residues long: MLVLGFESSCDETGVALYDTERGLVAHALHTQMAMHAEYGGVVPELASRDHIRRIIPLTQACLAEGGKTLADLDAIAFTQGPGLGGALLVGASVANALAFGLDIPVIDVHHLEGHLLSPMLADPAPAFPFVALLVSGGHTQLMAVHGVGQYETLGETLDDAAGEAFDKTAKLLGLPYPGGPLLSRLAESGDPARFTLPRPMLNSADLDMSFSGLKTAVLTLKTRVEADLGPIDEQTRADICRAFQESIVEVLVKKSLGALKRTGLKRLVVAGGVGANRQLRAALDAACARRRVEVFYPPLSLCTDNGAMIALAGAMRLKQAHAAGSFSIKPRWDLSSLPPVNGAA.

Positions 111 and 115 each coordinate Fe cation. Substrate contacts are provided by residues 134–138 (LVSGG), Asp167, Gly180, and Asn277. Asp305 contacts Fe cation.

This sequence belongs to the KAE1 / TsaD family. It depends on Fe(2+) as a cofactor.

The protein localises to the cytoplasm. It carries out the reaction L-threonylcarbamoyladenylate + adenosine(37) in tRNA = N(6)-L-threonylcarbamoyladenosine(37) in tRNA + AMP + H(+). In terms of biological role, required for the formation of a threonylcarbamoyl group on adenosine at position 37 (t(6)A37) in tRNAs that read codons beginning with adenine. Is involved in the transfer of the threonylcarbamoyl moiety of threonylcarbamoyl-AMP (TC-AMP) to the N6 group of A37, together with TsaE and TsaB. TsaD likely plays a direct catalytic role in this reaction. In Laribacter hongkongensis (strain HLHK9), this protein is tRNA N6-adenosine threonylcarbamoyltransferase.